The chain runs to 269 residues: UPF0162 protein YchA (269 aa).

The protein belongs to the UPF0162 family.

The protein is UPF0162 protein YchA (ychA) of Escherichia coli O157:H7.